Consider the following 422-residue polypeptide: Vitamin D3 receptor B (422 aa).

Positions 20–95 form a DNA-binding region, nuclear receptor; that stretch reads PRICGVCGDK…IGMMKEFILT (76 aa). Residues C23, C26, C40, C43, C59, C65, C75, and C78 each contribute to the Zn(2+) site. 2 consecutive NR C4-type zinc fingers follow at residues 23–43 and 59–78; these read CGVC…CEGC and CPFN…CQAC. The hinge stretch occupies residues 96–125; that stretch reads DEEVQRKKELIQRRKDEEAHREAQKPRLSD. Residues 106–128 are disordered; it reads IQRRKDEEAHREAQKPRLSDEQR. One can recognise an NR LBD domain in the interval 126-418; it reads EQRNIIDTLV…LTPLVLEVFG (293 aa). Calcitriol is bound at residue Y142. Residues 145-190 are disordered; sequence SYSDFSRFRPPVREGPVTRSASRAASLHSLSDASSDSFSHSPESGD. Residues 163–185 show a composition bias toward low complexity; sequence RSASRAASLHSLSDASSDSFSHS. S234 serves as a coordination point for calcitriol. An interaction with coactivator LXXLL motif region spans residues 243-261; it reads KMIPGFRELTAEDQIALLK. R271, S275, H302, and H392 together coordinate calcitriol. Residues 411 to 419 carry the 9aaTAD motif; the sequence is PLVLEVFGG.

This sequence belongs to the nuclear hormone receptor family. Homodimer in the absence of bound vitamin D3. Heterodimer with RXRA after vitamin D3 binding. Interacts with ncoa1 and possibly other coactivators, leading to a strong increase of transcription of target genes. Detected in embryo 24 to 48 hours after fertilization, and in intestinal bulb.

The protein resides in the nucleus. The protein localises to the cytoplasm. Its function is as follows. Nuclear receptor for calcitriol, the active form of vitamin D3 which mediates the action of this vitamin on cells. Enters the nucleus upon vitamin D3 binding where it forms heterodimers with the retinoid X receptor/RXR. The VDR-RXR heterodimers bind to specific response elements on DNA and activate the transcription of vitamin D3-responsive target genes. Recruited to promoters via its interaction with BAZ1B/WSTF which mediates the interaction with acetylated histones, an essential step for VDR-promoter association. Plays a central role in calcium homeostasis. The sequence is that of Vitamin D3 receptor B (vdrb) from Danio rerio (Zebrafish).